A 76-amino-acid polypeptide reads, in one-letter code: Theta defensin subunit C (76 aa).

The signal sequence occupies residues 1–22 (MRTFAFLTAMLLLVALHAQAEA). A propeptide spanning residues 23–64 (RQARADEAAIQEQPGADDQGMAHSFTRNESAVLPLSESERGL) is cleaved from the precursor. A Cyclopeptide (Arg-Cys) (interchain with C-73 in subunit A); in form BTD-4 cross-link involves residue Arg65. A disulfide bridge connects residues Cys68 and Cys73. Residue Cys73 forms a Cyclopeptide (Cys-Arg) (interchain with R-65 in subunit A); in form BTD-4 linkage. A propeptide spanning residues 74–76 (RLL) is cleaved from the precursor.

This sequence belongs to the alpha-defensin family. Theta subfamily. BTD-4 is a cyclic heterodimer composed of subunits A and C; disulfide-linked. In terms of processing, forms a cyclic peptide with subunit A (BTD-4). An additional intersubunit disulfide bond is formed.

In terms of biological role, BTD-4 has antimicrobial activity against the Gram-negative bacterium E.coli ML35, the Gram-positive bacterium S.aureus 502a, and the fungus C.albicans 16820. This Papio anubis (Olive baboon) protein is Theta defensin subunit C (BTDC).